A 248-amino-acid chain; its full sequence is Phosphatidylglycerol--prolipoprotein diacylglyceryl transferase (248 aa).

The next 3 helical transmembrane spans lie at phenylalanine 6–leucine 26, isoleucine 48–glutamate 68, and glycine 84–cysteine 104. An a 1,2-diacyl-sn-glycero-3-phospho-(1'-sn-glycerol)-binding site is contributed by arginine 130. The next 2 helical transmembrane spans lie at glycine 187–leucine 207 and isoleucine 214–leucine 234.

The protein belongs to the Lgt family.

The protein localises to the cell membrane. The enzyme catalyses L-cysteinyl-[prolipoprotein] + a 1,2-diacyl-sn-glycero-3-phospho-(1'-sn-glycerol) = an S-1,2-diacyl-sn-glyceryl-L-cysteinyl-[prolipoprotein] + sn-glycerol 1-phosphate + H(+). It functions in the pathway protein modification; lipoprotein biosynthesis (diacylglyceryl transfer). In terms of biological role, catalyzes the transfer of the diacylglyceryl group from phosphatidylglycerol to the sulfhydryl group of the N-terminal cysteine of a prolipoprotein, the first step in the formation of mature lipoproteins. This Finegoldia magna (strain ATCC 29328 / DSM 20472 / WAL 2508) (Peptostreptococcus magnus) protein is Phosphatidylglycerol--prolipoprotein diacylglyceryl transferase.